Here is a 3953-residue protein sequence, read N- to C-terminus: Zinc finger protein 469 (3953 aa).

Disordered regions lie at residues 1-274, 313-465, 512-672, 763-784, 869-1383, 1400-1461, 1575-1610, 1703-1864, 1884-1947, 1991-2030, 2070-2700, 2716-2915, 3001-3036, and 3072-3110; these read MPGE…VSFQ, WPEE…MFFN, EWQG…FPFP, GHQR…RVPA, ADEE…HSEL, PKPS…DLPV, LQRS…SQRR, SKTG…GASS, VSNT…TVEG, KTQG…TGPT, LTAA…TLGP, AGET…LSDS, EMPA…PGNT, and GPSF…PAKG. The span at 187 to 198 shows a compositional bias: polar residues; that stretch reads PPSSFTSTNYTS. Pro residues-rich tracts occupy residues 202–211 and 324–335; these read TPRPPAPGPP and YPLPTQPAPSPL. Positions 603-623 are enriched in low complexity; the sequence is STCSSLSPMSSSPANPSSEES. Pro residues-rich tracts occupy residues 768–780 and 896–911; these read PGPP…PAAP and KAPP…PQTP. Residues 944-953 show a composition bias toward basic residues; sequence QQRRGKQLKL. The segment covering 963–975 has biased composition (gly residues); the sequence is AAEGSGSGGGGRA. Basic and acidic residues predominate over residues 981–991; the sequence is RRNDGLGERPP. Over residues 1005 to 1017 the composition is skewed to low complexity; that stretch reads RADPAPRVPRAAA. Basic residues-rich tracts occupy residues 1025–1042 and 1058–1070; these read SRRR…RKAR and KNRR…RRAG. The span at 1082–1093 shows a compositional bias: basic and acidic residues; the sequence is PGAEDRRLREYD. Residues 1094-1103 are compositionally biased toward acidic residues; it reads FASESEEDEQ. Residues 1120 to 1137 are compositionally biased toward basic and acidic residues; it reads KRKEVELTQGPREDEPQK. Residues 1158 to 1177 show a composition bias toward low complexity; the sequence is PGGSRPGPGRSPQARGPSRS. Basic and acidic residues predominate over residues 1213 to 1229; that stretch reads EETRPSLDFPQEAKEPE. Composition is skewed to polar residues over residues 1278–1290 and 1333–1350; these read PKPS…TAPH and NPSS…SKIS. The segment covering 1577–1595 has biased composition (basic and acidic residues); the sequence is RSKDTRGAPRELAEAESVG. 2 stretches are compositionally biased toward polar residues: residues 1991 to 2005 and 2014 to 2024; these read KTQG…QPEN and NHASVNASPKT. Over residues 2243-2262 the composition is skewed to basic and acidic residues; the sequence is DTPKDSTLRIPEDSRKEKLW. Residues 2409-2435 are compositionally biased toward polar residues; it reads TAPSSTASDFQSDSPQSHRNASHQTPQ. Residues 2472–2498 form a C2H2-type 1 zinc finger; it reads VTCEVCAASFRSGPGLSRHKARKHRPH. The span at 2488–2498 shows a compositional bias: basic residues; the sequence is SRHKARKHRPH. Residues 2506–2521 are compositionally biased toward low complexity; the sequence is SPAALPAQQPLEPLAQ. Over residues 2534 to 2546 the composition is skewed to basic and acidic residues; the sequence is SGKERPNHSRGDP. Over residues 2565-2574 the composition is skewed to low complexity; the sequence is PGSPHSQQLH. Basic and acidic residues predominate over residues 2592–2631; that stretch reads PRPDQAREDELHPKQAEKREGRRWRREPTVDSPSHSEGKS. A compositionally biased stretch (basic residues) spans 2632–2642; sequence NKKRGKLRGRR. The span at 2664 to 2676 shows a compositional bias: low complexity; sequence PSPAMASYAASPS. Residues 2777 to 2787 are compositionally biased toward basic and acidic residues; sequence DSSRAHSRSEE. Residues 2805–2816 show a composition bias toward low complexity; sequence TSSSPADSTTSS. A compositionally biased stretch (basic residues) spans 2869 to 2879; it reads LTRKRNPHVYG. A compositionally biased stretch (low complexity) spans 3095–3105; the sequence is AAGAGRAQGRG. The segment at 3115 to 3137 adopts a C2H2-type 2 zinc-finger fold; sequence YKCKVCFQRFRSLGELDLHKLAH. Residues 3232–3322 are disordered; it reads TEPAPKHHRG…PDPWAGGEPL (91 aa). Over residues 3260-3272 the composition is skewed to basic and acidic residues; the sequence is GEAKKDSPGERAK. Residues 3302 to 3314 are compositionally biased toward pro residues; the sequence is PGPPRTTPSPSPD. 2 C2H2-type zinc fingers span residues 3337-3359 and 3365-3388; these read RDCH…LAVH and YLCP…GGAH. Residues 3418–3442 form a C2H2-type 5; degenerate zinc finger; the sequence is FACSSCNYTFAKKEQFDRHMNKHLR. 3 disordered regions span residues 3448 to 3501, 3518 to 3559, and 3576 to 3925; these read FAFR…PILS, STTK…SPFP, and ERPE…HRTA. The segment covering 3584 to 3602 has biased composition (low complexity); it reads PGSPGPLLQQALPLGASLP. Over residues 3633-3651 the composition is skewed to basic and acidic residues; sequence CAPDHFQEDHLLQKEKEVS. Composition is skewed to low complexity over residues 3728 to 3741 and 3749 to 3759; these read PGPS…PRPG and QPQPASGQLQS. 2 stretches are compositionally biased toward basic and acidic residues: residues 3876–3892 and 3915–3925; these read EQRK…DRLG and EPAEPHTHRTA.

It belongs to the krueppel C2H2-type zinc-finger protein family. Detected in cornea, sclera, skin fibroblasts and striated muscle.

The protein resides in the nucleus. May be involved in transcriptional regulation. In Homo sapiens (Human), this protein is Zinc finger protein 469 (ZNF469).